The chain runs to 447 residues: tRNA-2-methylthio-N(6)-dimethylallyladenosine synthase (447 aa).

The 117-residue stretch at Arg4 to Thr120 folds into the MTTase N-terminal domain. [4Fe-4S] cluster contacts are provided by Cys13, Cys49, Cys83, Cys161, Cys165, and Cys168. The Radical SAM core domain maps to His147–Glu382. Residues Gln385–Glu446 enclose the TRAM domain.

Belongs to the methylthiotransferase family. MiaB subfamily. In terms of assembly, monomer. [4Fe-4S] cluster is required as a cofactor.

Its subcellular location is the cytoplasm. It carries out the reaction N(6)-dimethylallyladenosine(37) in tRNA + (sulfur carrier)-SH + AH2 + 2 S-adenosyl-L-methionine = 2-methylsulfanyl-N(6)-dimethylallyladenosine(37) in tRNA + (sulfur carrier)-H + 5'-deoxyadenosine + L-methionine + A + S-adenosyl-L-homocysteine + 2 H(+). Catalyzes the methylthiolation of N6-(dimethylallyl)adenosine (i(6)A), leading to the formation of 2-methylthio-N6-(dimethylallyl)adenosine (ms(2)i(6)A) at position 37 in tRNAs that read codons beginning with uridine. This is tRNA-2-methylthio-N(6)-dimethylallyladenosine synthase from Desulfotalea psychrophila (strain LSv54 / DSM 12343).